The primary structure comprises 406 residues: Tryptophan synthase beta chain (406 aa).

K99 bears the N6-(pyridoxal phosphate)lysine mark.

This sequence belongs to the TrpB family. As to quaternary structure, tetramer of two alpha and two beta chains. Pyridoxal 5'-phosphate serves as cofactor.

It carries out the reaction (1S,2R)-1-C-(indol-3-yl)glycerol 3-phosphate + L-serine = D-glyceraldehyde 3-phosphate + L-tryptophan + H2O. Its pathway is amino-acid biosynthesis; L-tryptophan biosynthesis; L-tryptophan from chorismate: step 5/5. In terms of biological role, the beta subunit is responsible for the synthesis of L-tryptophan from indole and L-serine. The chain is Tryptophan synthase beta chain from Phenylobacterium zucineum (strain HLK1).